The primary structure comprises 1479 residues: Chromosome partition protein MukB (1479 aa).

34 to 41 (GGNGAGKS) is an ATP binding site. Coiled coils occupy residues 138–163 (ETLNDRQARVVSLNELKDKLEAMEGV) and 331–664 (QAAS…RLSQ). Positions 665–782 (PGGSEDPRLN…ALPLFGRAAR (118 aa)) are flexible hinge. Coiled-coil stretches lie at residues 831-1112 (DDPE…TAKA) and 1206-1257 (VEAI…MLNQ).

Belongs to the SMC family. MukB subfamily. Homodimerization via its hinge domain. Binds to DNA via its C-terminal region. Interacts, and probably forms a ternary complex, with MukE and MukF via its C-terminal region. The complex formation is stimulated by calcium or magnesium. Interacts with tubulin-related protein FtsZ.

The protein localises to the cytoplasm. It localises to the nucleoid. Functionally, plays a central role in chromosome condensation, segregation and cell cycle progression. Functions as a homodimer, which is essential for chromosome partition. Involved in negative DNA supercoiling in vivo, and by this means organize and compact chromosomes. May achieve or facilitate chromosome segregation by condensation DNA from both sides of a centrally located replisome during cell division. This is Chromosome partition protein MukB from Klebsiella pneumoniae.